Consider the following 452-residue polypeptide: NADH-ubiquinone oxidoreductase chain 4 (452 aa).

The next 14 membrane-spanning stretches (helical) occupy residues 4–24 (LVLG…SMVW), 29–49 (VGSV…MTIS), 59–79 (FVSL…LLAS), 88–110 (LIYQ…LAFM), 114–136 (LLLF…TRWG), 144–164 (AGTY…ICLI), 182–202 (VFQL…AFLV), 221–241 (PIAG…YGMM), 252–272 (MLSS…MGGI), 282–304 (LIAY…GVAW), 309–331 (AMVL…NLWY), 345–365 (LIMI…MNMA), 390–410 (IVYM…LFGM), and 432–452 (LLTT…GLMF).

Belongs to the complex I subunit 4 family.

Its subcellular location is the mitochondrion membrane. It carries out the reaction a ubiquinone + NADH + 5 H(+)(in) = a ubiquinol + NAD(+) + 4 H(+)(out). Core subunit of the mitochondrial membrane respiratory chain NADH dehydrogenase (Complex I) that is believed to belong to the minimal assembly required for catalysis. Complex I functions in the transfer of electrons from NADH to the respiratory chain. The immediate electron acceptor for the enzyme is believed to be ubiquinone. In Branchiostoma lanceolatum (Common lancelet), this protein is NADH-ubiquinone oxidoreductase chain 4 (ND4).